The sequence spans 207 residues: High frequency lysogenization protein HflD homolog (207 aa).

Belongs to the HflD family.

Its subcellular location is the cytoplasm. The protein resides in the cell inner membrane. The protein is High frequency lysogenization protein HflD homolog of Pseudomonas fluorescens (strain SBW25).